We begin with the raw amino-acid sequence, 583 residues long: MMSRLNSVVIKLWLTIILIVTTVLILLSIALITFMQYYFTQETENAIREDARRISSLVEQSHNKEEAIKYSQTLIENPGGLMIINNKHRQSTASLSNIKKQMLNEVVNNDHFDDVFDKGKSVTRNVTIKEKGSSQTYILLGYPTKAQKNSHSKYSGVFIYKDLKSIEDTNNAITIITIITAVIFLTITTVFAFFLSSRITKPLRRLRDQATRVSEGDYSYKPSVTTKDEIGQLSQAFNQMSTEIEEHVDALSTSKNIRDSLINSMVEGVLGINESRQIILSNKMANDIMDNIDEDAKAFLLRQIEDTFKSKQTEMRDLEMNARFFVVTTSYIDKIEQGGKSGVVVTVRDMTNEHNLDQMKKDFIANVSHELRTPISLLQGYTESIVDGIVTEPDEIKESLAVVLDESKRLNRLVNELLNVARMDAEGLSVNKEVQPIAALLDKMKIKYRQQADDLGLNMTFNYCKKRVWSYDMDRMDQVLTNLIDNASRYTKPGDEIAITCDENESEDILYIKDTGTGIAPEHLQQVFDRFYKVDAARTRGKQGTGLGLFICKMIIEEHGGSIDVKSELGKGTTFIIKLPKPE.

The Cytoplasmic portion of the chain corresponds to 1-11 (MMSRLNSVVIK). The chain crosses the membrane as a helical span at residues 12-32 (LWLTIILIVTTVLILLSIALI). Residues 33 to 174 (TFMQYYFTQE…SIEDTNNAIT (142 aa)) are Extracellular-facing. Residues 175 to 195 (IITIITAVIFLTITTVFAFFL) traverse the membrane as a helical segment. Over 196–583 (SSRITKPLRR…TFIIKLPKPE (388 aa)) the chain is Cytoplasmic. Residues 197–249 (SRITKPLRRLRDQATRVSEGDYSYKPSVTTKDEIGQLSQAFNQMSTEIEEHVD) enclose the HAMP domain. A Histidine kinase domain is found at 366-583 (NVSHELRTPI…TFIIKLPKPE (218 aa)). A Phosphohistidine; by autocatalysis modification is found at His-369.

Its subcellular location is the cell membrane. It carries out the reaction ATP + protein L-histidine = ADP + protein N-phospho-L-histidine.. Its function is as follows. Member of the two-component regulatory system SrrA/SrrB, which is involved in the global regulation of staphylococcal virulence factors in response to environmental oxygen levels as well as biofilm formation. Also plays an essential role in host-derived nitric oxide resistance by regulating hmp/flavohemoglobin, an enzyme that detoxifies nitric oxide by converting it to nitrate. Functions as a sensor protein kinase which is autophosphorylated at a histidine residue and transfers its phosphate group to SrrA. In turn, SrrA binds to the upstream promoter regions of the target genes to positively and negatively regulate their expression. In Staphylococcus aureus (strain Mu50 / ATCC 700699), this protein is Sensor protein SrrB (srrB).